Reading from the N-terminus, the 442-residue chain is Chitinase-like protein Idgf4 (442 aa).

The signal sequence occupies residues 1 to 21; it reads MKLYALFSLLVGSLAIGQISA. One can recognise a GH18 domain in the interval 25-442; sequence HHLLCYYDGN…PILRQVKSKL (418 aa). Cysteines 29 and 56 form a disulfide. N-linked (GlcNAc...) asparagine glycosylation occurs at N224. A disulfide bridge connects residues C343 and C426.

Belongs to the glycosyl hydrolase 18 family. IDGF subfamily. Post-translationally, glycosylated. In terms of tissue distribution, primarily expressed in yolk cells and fat body. In larvae, it is expressed in the imaginal ring, the salivary duct, large salivary gland cells and weakly expressed in imaginal disks. More strongly expressed than Idgf1 and Idgf3.

The protein resides in the secreted. Functionally, cooperates with insulin-like peptides to stimulate the proliferation, polarization and motility of imaginal disk cells. May act by stabilizing the binding of insulin-like peptides to its receptor through a simultaneous interaction with both molecules to form a multiprotein signaling complex. This Drosophila melanogaster (Fruit fly) protein is Chitinase-like protein Idgf4 (Idgf4).